A 436-amino-acid chain; its full sequence is 3-ketoacyl-CoA thiolase (436 aa).

Residue C99 is the Acyl-thioester intermediate of the active site. Active-site proton acceptor residues include H392 and C422.

The protein belongs to the thiolase-like superfamily. Thiolase family. In terms of assembly, heterotetramer of two alpha chains (FadJ) and two beta chains (FadI).

It localises to the cytoplasm. The catalysed reaction is an acyl-CoA + acetyl-CoA = a 3-oxoacyl-CoA + CoA. The protein operates within lipid metabolism; fatty acid beta-oxidation. Its function is as follows. Catalyzes the final step of fatty acid oxidation in which acetyl-CoA is released and the CoA ester of a fatty acid two carbons shorter is formed. The sequence is that of 3-ketoacyl-CoA thiolase from Photobacterium profundum (strain SS9).